The chain runs to 342 residues: Holliday junction branch migration complex subunit RuvB (342 aa).

Residues 1-179 (MTNILSPEKS…FGIPMRLNFY (179 aa)) are large ATPase domain (RuvB-L). Residues I18, R19, G60, K63, T64, T65, 126 to 128 (EDF), R169, Y179, and R216 contribute to the ATP site. Residue T64 participates in Mg(2+) binding. The interval 180–250 (NTEELKQVLN…ICDFGLKRLT (71 aa)) is small ATPAse domain (RuvB-S). The segment at 253–342 (SIGLDSNDYR…NQLNILNENE (90 aa)) is head domain (RuvB-H). DNA contacts are provided by R289, R308, and R313.

This sequence belongs to the RuvB family. In terms of assembly, homohexamer. Forms an RuvA(8)-RuvB(12)-Holliday junction (HJ) complex. HJ DNA is sandwiched between 2 RuvA tetramers; dsDNA enters through RuvA and exits via RuvB. An RuvB hexamer assembles on each DNA strand where it exits the tetramer. Each RuvB hexamer is contacted by two RuvA subunits (via domain III) on 2 adjacent RuvB subunits; this complex drives branch migration. In the full resolvosome a probable DNA-RuvA(4)-RuvB(12)-RuvC(2) complex forms which resolves the HJ.

The protein localises to the cytoplasm. It carries out the reaction ATP + H2O = ADP + phosphate + H(+). Functionally, participates in UV-tolerance of Synechocystis PCC 6803. In terms of biological role, the RuvA-RuvB-RuvC complex processes Holliday junction (HJ) DNA during genetic recombination and DNA repair, while the RuvA-RuvB complex plays an important role in the rescue of blocked DNA replication forks via replication fork reversal (RFR). RuvA specifically binds to HJ cruciform DNA, conferring on it an open structure. The RuvB hexamer acts as an ATP-dependent pump, pulling dsDNA into and through the RuvAB complex. RuvB forms 2 homohexamers on either side of HJ DNA bound by 1 or 2 RuvA tetramers; 4 subunits per hexamer contact DNA at a time. Coordinated motions by a converter formed by DNA-disengaged RuvB subunits stimulates ATP hydrolysis and nucleotide exchange. Immobilization of the converter enables RuvB to convert the ATP-contained energy into a lever motion, pulling 2 nucleotides of DNA out of the RuvA tetramer per ATP hydrolyzed, thus driving DNA branch migration. The RuvB motors rotate together with the DNA substrate, which together with the progressing nucleotide cycle form the mechanistic basis for DNA recombination by continuous HJ branch migration. Branch migration allows RuvC to scan DNA until it finds its consensus sequence, where it cleaves and resolves cruciform DNA. The chain is Holliday junction branch migration complex subunit RuvB from Rickettsia prowazekii (strain Madrid E).